A 408-amino-acid chain; its full sequence is Arginine biosynthesis bifunctional protein ArgJ (408 aa).

Threonine 156, lysine 182, threonine 193, glutamate 279, asparagine 403, and serine 408 together coordinate substrate. Threonine 193 serves as the catalytic Nucleophile.

This sequence belongs to the ArgJ family. In terms of assembly, heterotetramer of two alpha and two beta chains.

The protein localises to the cytoplasm. The catalysed reaction is N(2)-acetyl-L-ornithine + L-glutamate = N-acetyl-L-glutamate + L-ornithine. The enzyme catalyses L-glutamate + acetyl-CoA = N-acetyl-L-glutamate + CoA + H(+). The protein operates within amino-acid biosynthesis; L-arginine biosynthesis; L-ornithine and N-acetyl-L-glutamate from L-glutamate and N(2)-acetyl-L-ornithine (cyclic): step 1/1. It participates in amino-acid biosynthesis; L-arginine biosynthesis; N(2)-acetyl-L-ornithine from L-glutamate: step 1/4. Its function is as follows. Catalyzes two activities which are involved in the cyclic version of arginine biosynthesis: the synthesis of N-acetylglutamate from glutamate and acetyl-CoA as the acetyl donor, and of ornithine by transacetylation between N(2)-acetylornithine and glutamate. This chain is Arginine biosynthesis bifunctional protein ArgJ, found in Dechloromonas aromatica (strain RCB).